A 168-amino-acid polypeptide reads, in one-letter code: Protein-export protein SecB (168 aa).

A disordered region spans residues Met-1–Val-21.

Belongs to the SecB family. Homotetramer, a dimer of dimers. One homotetramer interacts with 1 SecA dimer.

The protein localises to the cytoplasm. Its function is as follows. One of the proteins required for the normal export of preproteins out of the cell cytoplasm. It is a molecular chaperone that binds to a subset of precursor proteins, maintaining them in a translocation-competent state. It also specifically binds to its receptor SecA. In Chelativorans sp. (strain BNC1), this protein is Protein-export protein SecB.